We begin with the raw amino-acid sequence, 312 residues long: Very-long-chain 3-oxoacyl-CoA reductase (312 aa).

The helical transmembrane segment at 4 to 24 (APPAAGFLYWVGASTIAYLAL) threads the bilayer. 50-79 (GEWAVVTGGTDGIGKAYAEELAKRGMKIVL) provides a ligand contact to NADP(+). 2 helical membrane passes run 182 to 202 (GVIL…LTIY) and 269 to 285 (TTGY…NSIM). Substrate is bound at residue Ser189. Tyr202 serves as the catalytic Proton acceptor. A Di-lysine motif motif is present at residues 308-312 (KRKKN).

It belongs to the short-chain dehydrogenases/reductases (SDR) family. 17-beta-HSD 3 subfamily. In terms of tissue distribution, expressed in most tissues tested.

The protein resides in the endoplasmic reticulum membrane. It carries out the reaction a very-long-chain (3R)-3-hydroxyacyl-CoA + NADP(+) = a very-long-chain 3-oxoacyl-CoA + NADPH + H(+). It catalyses the reaction 17beta-estradiol + NAD(+) = estrone + NADH + H(+). The enzyme catalyses 17beta-estradiol + NADP(+) = estrone + NADPH + H(+). The catalysed reaction is 3-oxooctadecanoyl-CoA + NADPH + H(+) = (3R)-hydroxyoctadecanoyl-CoA + NADP(+). It carries out the reaction (7Z,10Z,13Z,16Z)-3-oxodocosatetraenoyl-CoA + NADPH + H(+) = (3R)-hydroxy-(7Z,10Z,13Z,16Z)-docosatetraenoyl-CoA + NADP(+). It catalyses the reaction 3-oxo-(7Z,10Z,13Z,16Z,19Z)-docosapentaenoyl-CoA + NADPH + H(+) = (3R)-hydroxy-(7Z,10Z,13Z,16Z,19Z)-docosapentaenoyl-CoA + NADP(+). The enzyme catalyses (8Z,11Z,14Z)-3-oxoeicosatrienoyl-CoA + NADPH + H(+) = (3R)-hydroxy-(8Z,11Z,14Z)-eicosatrienoyl-CoA + NADP(+). Its pathway is lipid metabolism; fatty acid biosynthesis. It participates in steroid biosynthesis; estrogen biosynthesis. In terms of biological role, catalyzes the second of the four reactions of the long-chain fatty acids elongation cycle. This endoplasmic reticulum-bound enzymatic process, allows the addition of two carbons to the chain of long- and very long-chain fatty acids/VLCFAs per cycle. This enzyme has a 3-ketoacyl-CoA reductase activity, reducing 3-ketoacyl-CoA to 3-hydroxyacyl-CoA, within each cycle of fatty acid elongation. Thereby, it may participate in the production of VLCFAs of different chain lengths that are involved in multiple biological processes as precursors of membrane lipids and lipid mediators. May also catalyze the transformation of estrone (E1) into estradiol (E2) and play a role in estrogen formation. In Mus musculus (Mouse), this protein is Very-long-chain 3-oxoacyl-CoA reductase.